The sequence spans 815 residues: Probable oligoxyloglucan-reducing end-specific xyloglucanase (815 aa).

Positions 1-19 are cleaved as a signal peptide; the sequence is MKFWLQQLGLAVLCASSAA. D58 functions as the Nucleophile in the catalytic mechanism. N-linked (GlcNAc...) asparagine glycosylation is present at N113. A BNR 1 repeat occupies 118 to 128; sequence FVSNDRGATFT. The N-linked (GlcNAc...) asparagine glycan is linked to N180. One copy of the BNR 2 repeat lies at 218–228; the sequence is YYTTDGGKNWE. 3 N-linked (GlcNAc...) asparagine glycosylation sites follow: N246, N290, and N304. The stretch at 351-361 is one BNR 3 repeat; it reads YLSRDGGKTWK. The N-linked (GlcNAc...) asparagine glycan is linked to N387. The active-site Proton donor is D489. The BNR 4 repeat unit spans residues 545–555; it reads YSTDGGSEWTK. Residues N564 and N603 are each glycosylated (N-linked (GlcNAc...) asparagine). One copy of the BNR 5 repeat lies at 649 to 658; the sequence is YVSTDGGLSY. N662 carries N-linked (GlcNAc...) asparagine glycosylation. 2 BNR repeats span residues 696–706 and 749–759; these read YHTTDFGKRWK and YRSDDNGSTWD. N754 is a glycosylation site (N-linked (GlcNAc...) asparagine).

This sequence belongs to the glycosyl hydrolase 74 family.

The protein localises to the secreted. The enzyme catalyses Hydrolysis of cellobiose from the reducing end of xyloglucans consisting of a beta-(1-&gt;4)-linked glucan carrying alpha-D-xylosyl groups on O-6 of the glucose residues. To be a substrate, the first residue must be unsubstituted, the second residue may bear a xylosyl group, whether further glycosylated or not, and the third residue, which becomes the new terminus by the action of the enzyme, is preferably xylosylated, but this xylose residue must not be further substituted.. Its function is as follows. Oligoxyloglucan-reducing end-specific xyloglucanase involved in degradation of xyloglucans. Releases the first two glycosyl segments from oligoxyloglucans. Active against cotton xyloglucan, tamarind xyloglucan and tamarind xyloglucan oligomers. The sequence is that of Probable oligoxyloglucan-reducing end-specific xyloglucanase (xgcA) from Neosartorya fischeri (strain ATCC 1020 / DSM 3700 / CBS 544.65 / FGSC A1164 / JCM 1740 / NRRL 181 / WB 181) (Aspergillus fischerianus).